A 369-amino-acid polypeptide reads, in one-letter code: Peptidyl-prolyl cis-trans isomerase D (369 aa).

The 169-residue stretch at 7–175 (YFDISCNGKP…EDWKIADCGE (169 aa)) folds into the PPIase cyclophilin-type domain. 3 TPR repeats span residues 217–250 (VSKI…LNDY), 268–301 (LSCY…EQID), and 306–339 (TKAL…EPND).

Belongs to the cyclophilin-type PPIase family. PPIase D subfamily.

The protein resides in the cytoplasm. The enzyme catalyses [protein]-peptidylproline (omega=180) = [protein]-peptidylproline (omega=0). In terms of biological role, PPIases accelerate the folding of proteins. It catalyzes the cis-trans isomerization of proline imidic peptide bonds in oligopeptides. The polypeptide is Peptidyl-prolyl cis-trans isomerase D (CPR6) (Candida albicans (strain SC5314 / ATCC MYA-2876) (Yeast)).